Consider the following 352-residue polypeptide: Molybdenum import ATP-binding protein ModC (352 aa).

Residues 1–229 (MLELNFSQTL…SVMNPWLPKE (229 aa)) form the ABC transporter domain. 31-38 (GVSGAGKT) provides a ligand contact to ATP. A Mop domain is found at 289-352 (QTSIRNVLRA…AQIKSVSITA (64 aa)).

This sequence belongs to the ABC transporter superfamily. Molybdate importer (TC 3.A.1.8) family. The complex is composed of two ATP-binding proteins (ModC), two transmembrane proteins (ModB) and a solute-binding protein (ModA).

Its subcellular location is the cell inner membrane. It catalyses the reaction molybdate(out) + ATP + H2O = molybdate(in) + ADP + phosphate + H(+). In terms of biological role, part of the ABC transporter complex ModABC involved in molybdenum import. Responsible for energy coupling to the transport system. The polypeptide is Molybdenum import ATP-binding protein ModC (Escherichia coli O6:H1 (strain CFT073 / ATCC 700928 / UPEC)).